The primary structure comprises 284 residues: uncharacterized protein (284 aa).

An FMN-binding site is contributed by Gln-54. The active-site Proton donor is the Cys-83. Residues Lys-125, His-153, 183-185 (NGG), and 207-208 (AN) each bind FMN.

This sequence belongs to the Dus family. FMN is required as a cofactor.

Its function is as follows. Catalyzes the synthesis of dihydrouridine, a modified base found in the D-loop of most tRNAs. This is an uncharacterized protein from Caenorhabditis elegans.